Consider the following 263-residue polypeptide: L-aspartate dehydrogenase (263 aa).

Residues Ala120 and Asn186 each coordinate NAD(+). Residue His216 is part of the active site.

The protein belongs to the L-aspartate dehydrogenase family.

It carries out the reaction L-aspartate + NADP(+) + H2O = oxaloacetate + NH4(+) + NADPH + H(+). The enzyme catalyses L-aspartate + NAD(+) + H2O = oxaloacetate + NH4(+) + NADH + H(+). The protein operates within cofactor biosynthesis; NAD(+) biosynthesis; iminoaspartate from L-aspartate (dehydrogenase route): step 1/1. Specifically catalyzes the NAD or NADP-dependent dehydrogenation of L-aspartate to iminoaspartate. This chain is L-aspartate dehydrogenase, found in Psychrobacter cryohalolentis (strain ATCC BAA-1226 / DSM 17306 / VKM B-2378 / K5).